The primary structure comprises 291 residues: Lipoyl synthase (291 aa).

The [4Fe-4S] cluster site is built by Cys35, Cys40, Cys46, Cys61, Cys65, Cys68, and Ser273. The Radical SAM core domain occupies 47-262 (FGKRQATFLI…KERALTMGFE (216 aa)).

This sequence belongs to the radical SAM superfamily. Lipoyl synthase family. It depends on [4Fe-4S] cluster as a cofactor.

The protein resides in the cytoplasm. The catalysed reaction is [[Fe-S] cluster scaffold protein carrying a second [4Fe-4S](2+) cluster] + N(6)-octanoyl-L-lysyl-[protein] + 2 oxidized [2Fe-2S]-[ferredoxin] + 2 S-adenosyl-L-methionine + 4 H(+) = [[Fe-S] cluster scaffold protein] + N(6)-[(R)-dihydrolipoyl]-L-lysyl-[protein] + 4 Fe(3+) + 2 hydrogen sulfide + 2 5'-deoxyadenosine + 2 L-methionine + 2 reduced [2Fe-2S]-[ferredoxin]. Its pathway is protein modification; protein lipoylation via endogenous pathway; protein N(6)-(lipoyl)lysine from octanoyl-[acyl-carrier-protein]: step 2/2. Functionally, catalyzes the radical-mediated insertion of two sulfur atoms into the C-6 and C-8 positions of the octanoyl moiety bound to the lipoyl domains of lipoate-dependent enzymes, thereby converting the octanoylated domains into lipoylated derivatives. This chain is Lipoyl synthase, found in Citrifermentans bemidjiense (strain ATCC BAA-1014 / DSM 16622 / JCM 12645 / Bem) (Geobacter bemidjiensis).